The primary structure comprises 231 residues: Protein OPG061 (231 aa).

This sequence belongs to the orthopoxvirus OPG058 family.

The protein localises to the host nucleus. The protein resides in the host nucleolus. This chain is Protein OPG061 (OPG061), found in Homo sapiens (Human).